Reading from the N-terminus, the 171-residue chain is Adenine phosphoribosyltransferase (171 aa).

Belongs to the purine/pyrimidine phosphoribosyltransferase family. As to quaternary structure, homodimer.

The protein localises to the cytoplasm. The enzyme catalyses AMP + diphosphate = 5-phospho-alpha-D-ribose 1-diphosphate + adenine. Its pathway is purine metabolism; AMP biosynthesis via salvage pathway; AMP from adenine: step 1/1. In terms of biological role, catalyzes a salvage reaction resulting in the formation of AMP, that is energically less costly than de novo synthesis. The chain is Adenine phosphoribosyltransferase from Ruminiclostridium cellulolyticum (strain ATCC 35319 / DSM 5812 / JCM 6584 / H10) (Clostridium cellulolyticum).